The primary structure comprises 149 residues: Calmodulin (149 aa).

A2 carries the N-acetylalanine modification. EF-hand domains lie at 8-43 (EQVS…LGQN), 44-79 (PSES…KMKD), 81-116 (DSEE…IGEK), and 117-149 (LTDD…MMQK). 19 residues coordinate Ca(2+): D21, D23, D25, Q27, E32, D57, D59, N61, T63, E68, D94, D96, N98, E105, D130, D132, D134, R136, and E141.

This sequence belongs to the calmodulin family.

Calmodulin mediates the control of a large number of enzymes, ion channels and other proteins by Ca(2+). Among the enzymes to be stimulated by the calmodulin-Ca(2+) complex are a number of protein kinases and phosphatases. The sequence is that of Calmodulin from Colletotrichum gloeosporioides (Anthracnose fungus).